The sequence spans 250 residues: 2,3-bisphosphoglycerate-dependent phosphoglycerate mutase (250 aa).

Substrate contacts are provided by residues 10–17 (RHGESQWN), 23–24 (TG), Arg-62, 89–92 (ERHY), Lys-100, 116–117 (RR), and 185–186 (GN). The Tele-phosphohistidine intermediate role is filled by His-11. The active-site Proton donor/acceptor is the Glu-89.

This sequence belongs to the phosphoglycerate mutase family. BPG-dependent PGAM subfamily. Homodimer.

The enzyme catalyses (2R)-2-phosphoglycerate = (2R)-3-phosphoglycerate. Its pathway is carbohydrate degradation; glycolysis; pyruvate from D-glyceraldehyde 3-phosphate: step 3/5. Catalyzes the interconversion of 2-phosphoglycerate and 3-phosphoglycerate. In Shigella dysenteriae serotype 1 (strain Sd197), this protein is 2,3-bisphosphoglycerate-dependent phosphoglycerate mutase.